Consider the following 165-residue polypeptide: Yapsin-5 (165 aa).

The N-terminal stretch at 1 to 24 (MQLFSILSLLSSLMCSLTVLGSSA) is a signal peptide. Asn-57 is a glycosylation site (N-linked (GlcNAc...) asparagine). Positions 67-165 (YVVKMEIGTP…TRLSSMTYTY (99 aa)) constitute a Peptidase A1 domain.

The protein belongs to the peptidase A1 family.

The sequence is that of Yapsin-5 (YPS5) from Saccharomyces cerevisiae (strain ATCC 204508 / S288c) (Baker's yeast).